The chain runs to 176 residues: Putative REP-associated tyrosine transposase (176 aa).

The Mg(2+) site is built by His-59 and His-61. Tyr-148 (nucleophile) is an active-site residue.

It belongs to the transposase 17 family. RAYT subfamily. In terms of assembly, homodimer. Mg(2+) serves as cofactor.

In terms of biological role, transposase responsible for transposition an insertion sequence (IS) element. Transposition occurs in 2 main steps, excision from the donor DNA 'top strand' into a single strand circle and its subsequent reinsertion into the DNA target. This increases the copy number of the IS. This chain is Putative REP-associated tyrosine transposase, found in Haemophilus influenzae (strain ATCC 51907 / DSM 11121 / KW20 / Rd).